The chain runs to 308 residues: Putative S-adenosyl-L-methionine-dependent methyltransferase Mmcs_1045 (308 aa).

Residues D133 and 162–163 (DL) contribute to the S-adenosyl-L-methionine site.

It belongs to the UPF0677 family.

Exhibits S-adenosyl-L-methionine-dependent methyltransferase activity. The chain is Putative S-adenosyl-L-methionine-dependent methyltransferase Mmcs_1045 from Mycobacterium sp. (strain MCS).